Here is a 714-residue protein sequence, read N- to C-terminus: Elongation factor G-like protein (714 aa).

A tr-type G domain is found at 21–289; sequence GGVRNVVLVG…VATRGFPSPM (269 aa). The interval 30 to 37 is G1; the sequence is GPSGGGKT. 30–37 is a binding site for GTP; that stretch reads GPSGGGKT. Residues 73–77 form a G2 region; sequence QRSVG. The segment at 94–97 is G3; it reads DTPG. GTP-binding positions include 94–98 and 148–151; these read DTPGY and TKLD. Residues 148–151 form a G4 region; the sequence is TKLD. The tract at residues 267 to 269 is G5; sequence CSS.

The protein belongs to the TRAFAC class translation factor GTPase superfamily. Classic translation factor GTPase family. EF-G/EF-2 subfamily.

This chain is Elongation factor G-like protein, found in Mycobacterium tuberculosis (strain CDC 1551 / Oshkosh).